We begin with the raw amino-acid sequence, 134 residues long: Ribonuclease P protein component (134 aa).

The protein belongs to the RnpA family. In terms of assembly, consists of a catalytic RNA component (M1 or rnpB) and a protein subunit.

It catalyses the reaction Endonucleolytic cleavage of RNA, removing 5'-extranucleotides from tRNA precursor.. Functionally, RNaseP catalyzes the removal of the 5'-leader sequence from pre-tRNA to produce the mature 5'-terminus. It can also cleave other RNA substrates such as 4.5S RNA. The protein component plays an auxiliary but essential role in vivo by binding to the 5'-leader sequence and broadening the substrate specificity of the ribozyme. This chain is Ribonuclease P protein component, found in Ectopseudomonas mendocina (strain ymp) (Pseudomonas mendocina).